The following is a 437-amino-acid chain: GTPase Der (437 aa).

EngA-type G domains follow at residues Asn-3–Gly-167 and Pro-176–Thr-352. GTP is bound by residues Gly-9–Ser-16, Asp-56–Trp-60, Asn-119–Asp-122, Gly-182–Ser-189, Asp-229–Ile-233, and Asn-294–Asp-297. A KH-like domain is found at Thr-353–Lys-437.

The protein belongs to the TRAFAC class TrmE-Era-EngA-EngB-Septin-like GTPase superfamily. EngA (Der) GTPase family. As to quaternary structure, associates with the 50S ribosomal subunit.

In terms of biological role, GTPase that plays an essential role in the late steps of ribosome biogenesis. This is GTPase Der from Phocaeicola vulgatus (strain ATCC 8482 / DSM 1447 / JCM 5826 / CCUG 4940 / NBRC 14291 / NCTC 11154) (Bacteroides vulgatus).